The chain runs to 122 residues: MGVELAFPKVVGKQVYGSLYDCDENVLKDTKRLEQIIKEAADVGNMNILDIKSWKIGEGVSVVAIILESHITIHTWPEYKFATVDVYSCGPHTSPLKAFNYIVEKLGAKKYTINEADRSSEF.

Serine 69 functions as the Schiff-base intermediate with substrate; via pyruvic acid in the catalytic mechanism. Serine 69 is modified (pyruvic acid (Ser); by autocatalysis). Catalysis depends on histidine 74, which acts as the Proton acceptor; for processing activity. The active-site Proton donor; for catalytic activity is cysteine 89.

This sequence belongs to the prokaryotic AdoMetDC family. Type 1 subfamily. Heterotetramer of two alpha and two beta chains arranged as a dimer of alpha/beta heterodimers. The cofactor is pyruvate. In terms of processing, is synthesized initially as an inactive proenzyme. Formation of the active enzyme involves a self-maturation process in which the active site pyruvoyl group is generated from an internal serine residue via an autocatalytic post-translational modification. Two non-identical subunits are generated from the proenzyme in this reaction, and the pyruvate is formed at the N-terminus of the alpha chain, which is derived from the carboxyl end of the proenzyme. The post-translation cleavage follows an unusual pathway, termed non-hydrolytic serinolysis, in which the side chain hydroxyl group of the serine supplies its oxygen atom to form the C-terminus of the beta chain, while the remainder of the serine residue undergoes an oxidative deamination to produce ammonia and the pyruvoyl group blocking the N-terminus of the alpha chain.

It catalyses the reaction S-adenosyl-L-methionine + H(+) = S-adenosyl 3-(methylsulfanyl)propylamine + CO2. The protein operates within amine and polyamine biosynthesis; S-adenosylmethioninamine biosynthesis; S-adenosylmethioninamine from S-adenosyl-L-methionine: step 1/1. Its function is as follows. Catalyzes the decarboxylation of S-adenosylmethionine to S-adenosylmethioninamine (dcAdoMet), the propylamine donor required for the synthesis of the polyamines spermine and spermidine from the diamine putrescine. In Saccharolobus islandicus (strain L.S.2.15 / Lassen #1) (Sulfolobus islandicus), this protein is S-adenosylmethionine decarboxylase proenzyme.